Reading from the N-terminus, the 259-residue chain is UBX domain-containing protein 2A (259 aa).

The interval 1–151 is required for interaction with CHRNA3; the sequence is MKDVDNLKSI…SATPKIVSKA (151 aa). A required for inhibition of CHRNA3 ubiquitination and translocation of CHRNA3 to the plasma membrane resulting in an increase in acetylcholine-gated nicotinic acetylcholine receptor currents region spans residues 1 to 164; that stretch reads MKDVDNLKSI…EVENKNNLSA (164 aa). Positions 60–124 constitute an SEP domain; sequence QVDVNIKLWK…VEDKKNEICL (65 aa). Residues 167-259 form a required for interaction with VCP region; sequence LNNLEPITNI…TASFRELSEH (93 aa). The UBX domain occupies 169–246; that stretch reads NLEPITNIQI…DLQNAVIIQR (78 aa).

As to quaternary structure, part of a complex composed of STUB1/CHIP, VCP/p97, CHRNA3, and UBXN2A that modulates the ubiquitination and endoplasmic reticulum-associated degradation (ERAD) of CHRNA3. Within the complex UBXN2A acts as a scaffold protein required for the interaction of CHRNA3 with VCP/p97, this interaction also inhibits CHRNA3 ubiquitination by STUB1/CHIP and subsequently ERAD. Interacts (via SEP domain) with CHRNA3 and interacts (via UBX domain) with VCP/P97; these interactions are required for the interaction of CHRNA3 with the STUB1-VCP-UBXN2A complex. Interacts with HSPA9/MOT-2 (via SBD domain); the interaction inhibits HSPA9/MOT-2 interaction with and degradation of p53, thereby promotes p53 translocation to the nucleus. Interacts with RICTOR. Post-translationally, ubiquitinated. Expressed in the colon (at protein level).

The protein localises to the golgi apparatus. The protein resides in the endoplasmic reticulum. It localises to the perikaryon. It is found in the cell projection. Its subcellular location is the dendrite. The protein localises to the nucleus. The protein resides in the cytoplasm. Acts to repress the ubiquitination and subsequent endoplasmic reticulum-associated degradation of CHRNA3 by the STUB1-VCP-UBXN2A complex in cortical neurons. Also acts to promote the translocation of CHRNA3 to the plasma membrane and subsequently increases plasma membrane acetylcholine-gated ion-channel activation. Plays a role in the inhibition of STUB1-mediated TP53 degradation, via its interaction with HSPA9 which acts to inhibit TP53 binding to HSPA9. Positively mediates the ubiquitination and proteosomal degradation of RICTOR, may thereby act as a negative regulator of the mTORC2 pathway. This is UBX domain-containing protein 2A from Homo sapiens (Human).